An 877-amino-acid chain; its full sequence is GPI ethanolamine phosphate transferase 2 (877 aa).

Asparagine 190 and asparagine 368 each carry an N-linked (GlcNAc...) asparagine glycan. Helical transmembrane passes span 409–429 (VDIY…FGLF), 443–463 (YNWY…ASSL), 464–484 (IEEE…ALYF), 528–548 (VDLL…LIYS), and 570–590 (DFGS…SFSF). Asparagine 611 is a glycosylation site (N-linked (GlcNAc...) asparagine). Helical transmembrane passes span 634–654 (IHLS…RIVL), 683–703 (EIVP…KLLA), 716–736 (LMII…FSMG), 758–778 (VFLV…FWSL), 817–837 (LAGF…CFNL), and 854–876 (FASW…ILAL).

The protein belongs to the PIGG/PIGN/PIGO family. PIGG subfamily.

The protein resides in the endoplasmic reticulum membrane. Its pathway is glycolipid biosynthesis; glycosylphosphatidylinositol-anchor biosynthesis. In terms of biological role, ethanolamine phosphate transferase involved in glycosylphosphatidylinositol-anchor biosynthesis. Transfers ethanolamine phosphate to the GPI second mannose. The polypeptide is GPI ethanolamine phosphate transferase 2 (LAS21) (Debaryomyces hansenii (strain ATCC 36239 / CBS 767 / BCRC 21394 / JCM 1990 / NBRC 0083 / IGC 2968) (Yeast)).